Reading from the N-terminus, the 170-residue chain is MLSNTILSRSFYKRDTLCVAKDLLGKVLKFADYYGVINEVEAYIGQDDPACHAARGYTPRTAAMFGAAGFSYVYLIYGMYHCLNIVTEREGFPAAVLIRGIDLYKPTVLSLNGPGKLCKKLNITKNNNKIDLTQSHGFCVYNTTARPEYMATPRIGIKVGTDKLWRFKSM.

The protein belongs to the DNA glycosylase MPG family.

This Sodalis glossinidius protein is Putative 3-methyladenine DNA glycosylase.